The following is a 459-amino-acid chain: Glutamyl-tRNA reductase (459 aa).

Residues 49-52 (TCNR), Ser109, 114-116 (ETQ), and Gln120 each bind substrate. Cys50 functions as the Nucleophile in the catalytic mechanism. 189–194 (GAGKMG) is a binding site for NADP(+).

This sequence belongs to the glutamyl-tRNA reductase family. Homodimer.

It carries out the reaction (S)-4-amino-5-oxopentanoate + tRNA(Glu) + NADP(+) = L-glutamyl-tRNA(Glu) + NADPH + H(+). It participates in porphyrin-containing compound metabolism; protoporphyrin-IX biosynthesis; 5-aminolevulinate from L-glutamyl-tRNA(Glu): step 1/2. Catalyzes the NADPH-dependent reduction of glutamyl-tRNA(Glu) to glutamate 1-semialdehyde (GSA). In Halalkalibacterium halodurans (strain ATCC BAA-125 / DSM 18197 / FERM 7344 / JCM 9153 / C-125) (Bacillus halodurans), this protein is Glutamyl-tRNA reductase.